Reading from the N-terminus, the 1235-residue chain is ATP-dependent helicase/nuclease subunit A (1235 aa).

Residues 12–482 (SLWTDDQWKA…IDLSQNFRSR (471 aa)) enclose the UvrD-like helicase ATP-binding domain. An ATP-binding site is contributed by 33–40 (AAAGSGKT). In terms of domain architecture, UvrD-like helicase C-terminal spans 509-800 (AAELTLGAKS…RMMTIHASKG (292 aa)).

It belongs to the helicase family. AddA subfamily. Heterodimer of AddA and AddB/RexB. Requires Mg(2+) as cofactor.

It catalyses the reaction Couples ATP hydrolysis with the unwinding of duplex DNA by translocating in the 3'-5' direction.. The catalysed reaction is ATP + H2O = ADP + phosphate + H(+). Its function is as follows. The heterodimer acts as both an ATP-dependent DNA helicase and an ATP-dependent, dual-direction single-stranded exonuclease. Recognizes the chi site generating a DNA molecule suitable for the initiation of homologous recombination. The AddA nuclease domain is required for chi fragment generation; this subunit has the helicase and 3' -&gt; 5' nuclease activities. The chain is ATP-dependent helicase/nuclease subunit A from Listeria monocytogenes serotype 4a (strain HCC23).